Here is a 443-residue protein sequence, read N- to C-terminus: Crh-like protein 2 (443 aa).

The N-terminal stretch at M1 to A20 is a signal peptide. The GH16 domain occupies A21 to G306. A disulfide bond links C56 and C67. E164 (nucleophile) is an active-site residue. E168 acts as the Proton donor in catalysis. Chitin is bound at residue E168. Residues N194 and N237 are each glycosylated (N-linked (GlcNAc...) asparagine). Residues W257 and T268 each contribute to the chitin site. N-linked (GlcNAc...) asparagine glycans are attached at residues N332 and N359. Low complexity-rich tracts occupy residues A350–T367 and E378–S410. A disordered region spans residues A350 to S420. Over residues A411–S420 the composition is skewed to polar residues. The GPI-like-anchor amidated asparagine moiety is linked to residue N416. Positions A417–L443 are cleaved as a propeptide — removed in mature form. N427 carries N-linked (GlcNAc...) asparagine glycosylation.

It belongs to the glycosyl hydrolase 16 family. CRH1 subfamily. In terms of processing, the GPI-like anchor contains a phosphoceramide lipid group. The anchor position has not been determined.

The protein localises to the cell membrane. It is found in the secreted. The protein resides in the cell wall. It carries out the reaction Random endo-hydrolysis of N-acetyl-beta-D-glucosaminide (1-&gt;4)-beta-linkages in chitin and chitodextrins.. Functionally, dual chitinase/transglycosylase that plays a role in cell wall architecture. Chitinase and transglycosylase activities are coupled. Required for the polysaccharide cross-linking at the septa and the cell wall. More specifically, transfers chitin to 1,6-beta-glucan in the cell wall. In Aspergillus fumigatus (strain ATCC MYA-4609 / CBS 101355 / FGSC A1100 / Af293) (Neosartorya fumigata), this protein is Crh-like protein 2.